A 346-amino-acid polypeptide reads, in one-letter code: tRNA N6-adenosine threonylcarbamoyltransferase (346 aa).

Residues H111 and H115 each coordinate Fe cation. Residues 134 to 138 (LVSGG), D167, G180, and N279 contribute to the substrate site. D307 contacts Fe cation.

This sequence belongs to the KAE1 / TsaD family. It depends on Fe(2+) as a cofactor.

The protein resides in the cytoplasm. The catalysed reaction is L-threonylcarbamoyladenylate + adenosine(37) in tRNA = N(6)-L-threonylcarbamoyladenosine(37) in tRNA + AMP + H(+). Its function is as follows. Required for the formation of a threonylcarbamoyl group on adenosine at position 37 (t(6)A37) in tRNAs that read codons beginning with adenine. Is involved in the transfer of the threonylcarbamoyl moiety of threonylcarbamoyl-AMP (TC-AMP) to the N6 group of A37, together with TsaE and TsaB. TsaD likely plays a direct catalytic role in this reaction. This is tRNA N6-adenosine threonylcarbamoyltransferase from Burkholderia multivorans (strain ATCC 17616 / 249).